The following is a 234-amino-acid chain: ATP-dependent dethiobiotin synthetase BioD (234 aa).

12–17 lines the ATP pocket; it reads DVGKTF. Residue threonine 16 coordinates Mg(2+). Lysine 37 is an active-site residue. Serine 41 is a binding site for substrate. Residues aspartate 52, 118-121, and 178-179 each bind ATP; these read EGAG and SQ. Residues aspartate 52 and glutamate 118 each coordinate Mg(2+).

It belongs to the dethiobiotin synthetase family. Homodimer. Mg(2+) is required as a cofactor.

It is found in the cytoplasm. It carries out the reaction (7R,8S)-7,8-diammoniononanoate + CO2 + ATP = (4R,5S)-dethiobiotin + ADP + phosphate + 3 H(+). It functions in the pathway cofactor biosynthesis; biotin biosynthesis; biotin from 7,8-diaminononanoate: step 1/2. Catalyzes a mechanistically unusual reaction, the ATP-dependent insertion of CO2 between the N7 and N8 nitrogen atoms of 7,8-diaminopelargonic acid (DAPA, also called 7,8-diammoniononanoate) to form a ureido ring. This Phenylobacterium zucineum (strain HLK1) protein is ATP-dependent dethiobiotin synthetase BioD.